Consider the following 421-residue polypeptide: Odorant receptor 67b (421 aa).

Residues 1–48 (MQDQLDHELERIDKLPKLGLLWVEYSAYALGVNIAPRKRSSKYCRLTR) lie on the Cytoplasmic side of the membrane. Residues 49-69 (ILVLIVNLSIIYSLVAFIMEN) traverse the membrane as a helical segment. The Extracellular segment spans residues 70-71 (YM). A helical membrane pass occupies residues 72-92 (ISFETYVEAVLLTFQLSVGVV). Over 93–151 (KMFHFQNKVESCSQLVFSTETGEVLKSLGLFQLDLPRKKELLSSVSLILLNNWMIIDRQ) the chain is Cytoplasmic. A helical transmembrane segment spans residues 152–172 (VMFFFKIVCMPVLYYCVRPYF). Over 173–217 (QYIFDCYIKDKDTCEMTLTYPAIVPYLQLGNYEFPSYVIRFFLLQ) the chain is Extracellular. Residues 218–238 (SGPLWCFFAVFGFNSLFVVLT) traverse the membrane as a helical segment. At 239-289 (RYESGLIKVLRFLVQNSTSDILVPKDQRVKYLQCCVRLFARISSHHNQIEN) the chain is on the cytoplasmic side. A helical transmembrane segment spans residues 290 to 310 (LFKYIILVQCSVSSILICMLL). The Extracellular segment spans residues 311–315 (YKIST). The helical transmembrane segment at 316-336 (VLEVGWVWMGMIMVYFVTIAL) threads the bilayer. At 337–384 (EITLYNVSAQKVESQSELLFHDWYNCSWYNESREFKFMIKMMLLFSRR) the chain is on the cytoplasmic side. The helical transmembrane segment at 385 to 405 (TFVLSVGGFTSLSHKFLVQVF) threads the bilayer. The Extracellular segment spans residues 406 to 421 (RLSANFFLLLRNMNNK).

It belongs to the insect chemoreceptor superfamily. Heteromeric odorant receptor channel (TC 1.A.69) family. Or63a subfamily. As to quaternary structure, interacts with Orco. Complexes exist early in the endomembrane system in olfactory sensory neurons (OSNs), coupling these complexes to the conserved ciliary trafficking pathway.

The protein localises to the cell membrane. Odorant receptor which mediates acceptance or avoidance behavior, depending on its substrates. The odorant receptor repertoire encodes a large collection of odor stimuli that vary widely in identity, intensity, and duration. May form a complex with Orco to form odorant-sensing units, providing sensitive and prolonged odorant signaling and calcium permeability. Involved in the behavioral responses to ethyl acetate, pentyl acetate, methyl caproate, anisole, heptanal, 2-heptanone, r-carvone, nonanoic acid, and pyrazines. The polypeptide is Odorant receptor 67b (Or67b) (Drosophila melanogaster (Fruit fly)).